A 159-amino-acid chain; its full sequence is Keratin-associated protein 6-2 (159 aa).

The interval 11 to 147 (GYGCGYGSGY…SYYRSGCCGY (137 aa)) is 66 X 2 AA repeats of G-[YCGS].

The protein belongs to the KRTAP type 6 family. In terms of assembly, interacts with hair keratins. Expressed in skin during two hair growth cycles. Expression restricted to the cortical cells of hair follicles, appearing first in the cortical cells processing the flat nuclei located a few cells above the dermal papilla.

Its function is as follows. In the hair cortex, hair keratin intermediate filaments are embedded in an interfilamentous matrix, consisting of hair keratin-associated proteins (KRTAP), which are essential for the formation of a rigid and resistant hair shaft through their extensive disulfide bond cross-linking with abundant cysteine residues of hair keratins. The matrix proteins include the high-sulfur and high-glycine-tyrosine keratins. In Mus musculus (Mouse), this protein is Keratin-associated protein 6-2.